The sequence spans 580 residues: Xylulose kinase (580 aa).

Substrate is bound by residues His99, Arg170, Asp280, and Asn281. ATP contacts are provided by residues Trp355, 441–442 (GA), and Asn445.

The protein belongs to the FGGY kinase family. As to quaternary structure, monomer.

The enzyme catalyses D-xylulose + ATP = D-xylulose 5-phosphate + ADP + H(+). Its function is as follows. Phosphorylates D-xylulose to produce D-xylulose 5-phosphate, a molecule that may play an important role in the regulation of glucose metabolism and lipogenesis. The polypeptide is Xylulose kinase (XYLB) (Pongo abelii (Sumatran orangutan)).